The sequence spans 477 residues: Aspartyl/glutamyl-tRNA(Asn/Gln) amidotransferase subunit B (477 aa).

This sequence belongs to the GatB/GatE family. GatB subfamily. As to quaternary structure, heterotrimer of A, B and C subunits.

The catalysed reaction is L-glutamyl-tRNA(Gln) + L-glutamine + ATP + H2O = L-glutaminyl-tRNA(Gln) + L-glutamate + ADP + phosphate + H(+). It carries out the reaction L-aspartyl-tRNA(Asn) + L-glutamine + ATP + H2O = L-asparaginyl-tRNA(Asn) + L-glutamate + ADP + phosphate + 2 H(+). Its function is as follows. Allows the formation of correctly charged Asn-tRNA(Asn) or Gln-tRNA(Gln) through the transamidation of misacylated Asp-tRNA(Asn) or Glu-tRNA(Gln) in organisms which lack either or both of asparaginyl-tRNA or glutaminyl-tRNA synthetases. The reaction takes place in the presence of glutamine and ATP through an activated phospho-Asp-tRNA(Asn) or phospho-Glu-tRNA(Gln). The chain is Aspartyl/glutamyl-tRNA(Asn/Gln) amidotransferase subunit B from Lactococcus lactis subsp. cremoris (strain MG1363).